Here is a 92-residue protein sequence, read N- to C-terminus: Phosphoribosyl-ATP pyrophosphatase (92 aa).

Belongs to the PRA-PH family.

Its subcellular location is the cytoplasm. It carries out the reaction 1-(5-phospho-beta-D-ribosyl)-ATP + H2O = 1-(5-phospho-beta-D-ribosyl)-5'-AMP + diphosphate + H(+). The protein operates within amino-acid biosynthesis; L-histidine biosynthesis; L-histidine from 5-phospho-alpha-D-ribose 1-diphosphate: step 2/9. This Leptospira interrogans serogroup Icterohaemorrhagiae serovar copenhageni (strain Fiocruz L1-130) protein is Phosphoribosyl-ATP pyrophosphatase.